The sequence spans 325 residues: tRNA uridine(34) hydroxylase (325 aa).

One can recognise a Rhodanese domain in the interval 122-218 (EENRCLVLDV…YGQAMGTGKW (97 aa)). The active-site Cysteine persulfide intermediate is Cys178.

Belongs to the TrhO family.

It catalyses the reaction uridine(34) in tRNA + AH2 + O2 = 5-hydroxyuridine(34) in tRNA + A + H2O. Functionally, catalyzes oxygen-dependent 5-hydroxyuridine (ho5U) modification at position 34 in tRNAs. This Chlamydia felis (strain Fe/C-56) (Chlamydophila felis) protein is tRNA uridine(34) hydroxylase.